The primary structure comprises 516 residues: Protein indeterminate-domain 4, chloroplastic (516 aa).

Low complexity predominate over residues 1-26 (MSSSSYNTSVIPSSSSSAQPFFITSS). A disordered region spans residues 1 to 68 (MSSSSYNTSV…QPGNPNPDAE (68 aa)). The transit peptide at 1–70 (MSSSSYNTSV…GNPNPDAEVV (70 aa)) directs the protein to the chloroplast. Ser73 carries the phosphoserine modification. 2 C2H2-type zinc fingers span residues 83–105 (FICD…RRGH) and 124–154 (YLCP…YRKH). The short motif at 146–153 (IKKHYYRK) is the Nuclear localization signal element. Residues 159-182 (WKCEKCSKRYAVQSDWKAHSKTCG) form a C2H2-type 2; degenerate zinc finger. Zn(2+) contacts are provided by Cys161, Cys164, His177, Cys181, Cys188, Cys190, His203, and Cys207. The CCHC-type 2; atypical zinc-finger motif lies at 186–209 (YRCDCGTIFSRRDSYITHRAFCDA). An SHR-binding region spans residues 196-208 (RRDSYITHRAFCD). The segment at 483–516 (NRGGGGGGRGSARGGVSLDGEAKFPEQNYPFGRG) is disordered. Over residues 484–495 (RGGGGGGRGSAR) the composition is skewed to gly residues.

In terms of assembly, binds to RGA and SCL3 competitively in the nucleus.

It is found in the plastid. Its subcellular location is the chloroplast. It localises to the nucleus. Its function is as follows. Transcription factor that may act a transcriptional activator of nuclear-encoded photosynthetic gene expression. Binds DNA via its zinc fingers. Recognizes and binds to SCL3 promoter sequence 5'-AGACAA-3' to promote its expression when in complex with RGA. The chain is Protein indeterminate-domain 4, chloroplastic from Arabidopsis thaliana (Mouse-ear cress).